Here is a 113-residue protein sequence, read N- to C-terminus: Mini zinc finger protein 3 (113 aa).

A ZF-HD dimerization-type; degenerate zinc finger spans residues 24-83 (YGECRRNHAASTGGHAVDGCREFIAAEDGGGGNSTGAVGVAAAALKCAACGCHRSFHRRV). The interval 93-113 (DCDSGDTSSSSPSSSSSLSSE) is disordered. Low complexity predominate over residues 97 to 113 (GDTSSSSPSSSSSLSSE).

As to quaternary structure, homo- and heterodimers.

The protein localises to the cytoplasm. Functionally, inhibits zinc finger homeodomain (ZHD) transcription factors, by interacting with them to prevent both their nuclear localization and their DNA-binding properties. The protein is Mini zinc finger protein 3 (MIF3) of Oryza sativa subsp. indica (Rice).